A 290-amino-acid chain; its full sequence is Pyridoxal kinase PdxY (290 aa).

Substrate contacts are provided by residues S12 and 47–48; that span reads TQ. Residues D114, E151, K184, and 211–214 each bind ATP; that span reads RPLL. D225 serves as a coordination point for substrate.

It belongs to the pyridoxine kinase family. PdxY subfamily. Homodimer. The cofactor is Mg(2+).

The catalysed reaction is pyridoxal + ATP = pyridoxal 5'-phosphate + ADP + H(+). It functions in the pathway cofactor metabolism; pyridoxal 5'-phosphate salvage; pyridoxal 5'-phosphate from pyridoxal: step 1/1. In terms of biological role, pyridoxal kinase involved in the salvage pathway of pyridoxal 5'-phosphate (PLP). Catalyzes the phosphorylation of pyridoxal to PLP. The protein is Pyridoxal kinase PdxY of Pseudomonas fluorescens (strain Pf0-1).